The primary structure comprises 202 residues: MSPLTPKQKQVFDYIARHIGEQGFAPSQQEIARAFGFRSLGTVRNYLVRLEREGLLERNWNARRGLQLRTASERGMKLPLAGTVAAGKPIEAIEIPDVIEVPPTMVGSGEHFVLRVAGDSMIGDGIIDGDYVVVRKQATAEHGQTVVALLDNEATVKRLHRRNDRIELHPANPSMQPIVVTDPDNFRIEGVVVGVIRHYRSA.

Positions 28–48 form a DNA-binding region, H-T-H motif; sequence QQEIARAFGFRSLGTVRNYLV. Catalysis depends on for autocatalytic cleavage activity residues serine 120 and lysine 157.

This sequence belongs to the peptidase S24 family. In terms of assembly, homodimer.

It catalyses the reaction Hydrolysis of Ala-|-Gly bond in repressor LexA.. Functionally, represses a number of genes involved in the response to DNA damage (SOS response), including recA and lexA. In the presence of single-stranded DNA, RecA interacts with LexA causing an autocatalytic cleavage which disrupts the DNA-binding part of LexA, leading to derepression of the SOS regulon and eventually DNA repair. The chain is LexA repressor from Syntrophotalea carbinolica (strain DSM 2380 / NBRC 103641 / GraBd1) (Pelobacter carbinolicus).